The primary structure comprises 77 residues: Translation initiation factor IF-1, chloroplastic (77 aa).

The region spanning 1–71 is the S1-like domain; it reads MKEQKWIHEG…TRGRIIYRLR (71 aa).

This sequence belongs to the IF-1 family. As to quaternary structure, component of the 30S ribosomal translation pre-initiation complex which assembles on the 30S ribosome in the order IF-2 and IF-3, IF-1 and N-formylmethionyl-tRNA(fMet); mRNA recruitment can occur at any time during PIC assembly.

Its subcellular location is the plastid. It localises to the chloroplast. In terms of biological role, one of the essential components for the initiation of protein synthesis. Stabilizes the binding of IF-2 and IF-3 on the 30S subunit to which N-formylmethionyl-tRNA(fMet) subsequently binds. Helps modulate mRNA selection, yielding the 30S pre-initiation complex (PIC). Upon addition of the 50S ribosomal subunit IF-1, IF-2 and IF-3 are released leaving the mature 70S translation initiation complex. In Lactuca sativa (Garden lettuce), this protein is Translation initiation factor IF-1, chloroplastic.